Consider the following 493-residue polypeptide: Glycosyltransferase alg8 (493 aa).

4 consecutive transmembrane segments (helical) span residues 13–32 (GWLFYLSLLMGLAAALPTSI), 47–69 (VGIWRYSMGITHFVRGMIFLYIV), 380–402 (LTVAIIASFKYGGAFLLMYLLWI), and 422–444 (PAYPMILYYNQIVGALMKIYVFF).

It belongs to the glycosyltransferase 2 family.

It localises to the cell membrane. Its pathway is glycan biosynthesis; alginate biosynthesis. Functionally, possibly a processive enzyme that polymerizes GDP-mannuronic acid. This Pseudomonas syringae pv. tomato (strain ATCC BAA-871 / DC3000) protein is Glycosyltransferase alg8 (alg8).